We begin with the raw amino-acid sequence, 1622 residues long: ABC transporter C family member 1 (1622 aa).

9 helical membrane passes run 37-57, 73-93, 110-130, 145-165, 174-194, 336-356, 440-460, 527-547, and 557-577; these read FVLG…LWLI, FSYF…FRLV, EAFM…MTVV, FAVI…LSVK, YLYI…FVYF, AWIG…GVLC, VASI…TVII, FILN…FSLL, and FTSL…PNII. Residues 302 to 582 form the ABC transmembrane type-1 1 domain; the sequence is FWWGGFWKIG…LPNIITQMVN (281 aa). The 225-residue stretch at 614 to 838 folds into the ABC transporter 1 domain; sequence ISIRNGYFSW…GPLFQRLMEN (225 aa). 649 to 656 is a binding site for ATP; the sequence is GSTGEGKT. The interval 852 to 876 is disordered; sequence AEVDQTSVKPVENGNANNLQKDGIE. A compositionally biased stretch (polar residues) spans 855 to 871; it reads DQTSVKPVENGNANNLQ. Transmembrane regions (helical) follow at residues 909–929, 951–971, 1027–1049, 1053–1072, 1138–1158, and 1172–1192; these read ALGG…TQVF, PLFY…VTLI, AVFV…LIGI, LSLW…YLYY, LGIR…SLAV, and STMG…TAVL. Residues 916 to 1200 form the ABC transmembrane type-1 2 domain; sequence VMMLVICYVL…VLRLASLAEN (285 aa). Residues 1231 to 1246 form an interaction with calmodulin and FKP42/TWD1 region; the sequence is WPSSGSIKFEDVVLRY. Positions 1237-1471 constitute an ABC transporter 2 domain; that stretch reads IKFEDVVLRY…GESSFSKMVQ (235 aa). 1271–1278 serves as a coordination point for ATP; sequence GRTGAGKS.

Belongs to the ABC transporter superfamily. ABCC family. Conjugate transporter (TC 3.A.1.208) subfamily. As to quaternary structure, interacts with calmodulin (CaM), PAS1 and FKBP42/TWD1. In terms of tissue distribution, ubiquitous, with higher levels in leaves and stems and lower levels in roots. Localized in the root apex, root hair tips and root epidermis.

Its subcellular location is the vacuole membrane. The catalysed reaction is ATP + H2O + xenobioticSide 1 = ADP + phosphate + xenobioticSide 2.. Functionally, pump for glutathione S-conjugates. Mediates the transport of S-(2,4-dinitrophenyl)-glutathione (DNP-GS), GSSG, cyanidin 3-glucoside-GS (C3G-GS) and metolachlor-GS (MOC-GS). This is ABC transporter C family member 1 (ABCC1) from Arabidopsis thaliana (Mouse-ear cress).